The following is a 141-amino-acid chain: Putative nickel-responsive regulator (141 aa).

4 residues coordinate Ni(2+): histidine 80, histidine 91, histidine 93, and cysteine 99.

This sequence belongs to the transcriptional regulatory CopG/NikR family. Homotetramer. Ni(2+) serves as cofactor.

Functionally, transcriptional regulator. The protein is Putative nickel-responsive regulator of Methanocaldococcus jannaschii (strain ATCC 43067 / DSM 2661 / JAL-1 / JCM 10045 / NBRC 100440) (Methanococcus jannaschii).